A 137-amino-acid chain; its full sequence is uncharacterized protein (137 aa).

The next 2 helical transmembrane spans lie at 26 to 42 and 52 to 69; these read CSLC…FFAM and ASIP…GSIL.

Its subcellular location is the membrane. This is an uncharacterized protein from Saccharomyces cerevisiae (strain ATCC 204508 / S288c) (Baker's yeast).